The primary structure comprises 648 residues: Threonine--tRNA ligase (648 aa).

In terms of domain architecture, TGS spans Met1 to Thr61. The segment at Asp242–Pro540 is catalytic. The Zn(2+) site is built by Cys336, His387, and His517.

This sequence belongs to the class-II aminoacyl-tRNA synthetase family. Homodimer. Zn(2+) serves as cofactor.

It is found in the cytoplasm. It catalyses the reaction tRNA(Thr) + L-threonine + ATP = L-threonyl-tRNA(Thr) + AMP + diphosphate + H(+). Its function is as follows. Catalyzes the attachment of threonine to tRNA(Thr) in a two-step reaction: L-threonine is first activated by ATP to form Thr-AMP and then transferred to the acceptor end of tRNA(Thr). Also edits incorrectly charged L-seryl-tRNA(Thr). This is Threonine--tRNA ligase from Streptococcus equi subsp. zooepidemicus (strain H70).